The chain runs to 406 residues: Phosphopentomutase (406 aa).

Mn(2+) is bound by residues D10, D305, H310, D346, H347, and H358.

This sequence belongs to the phosphopentomutase family. It depends on Mn(2+) as a cofactor.

It localises to the cytoplasm. The enzyme catalyses 2-deoxy-alpha-D-ribose 1-phosphate = 2-deoxy-D-ribose 5-phosphate. The catalysed reaction is alpha-D-ribose 1-phosphate = D-ribose 5-phosphate. The protein operates within carbohydrate degradation; 2-deoxy-D-ribose 1-phosphate degradation; D-glyceraldehyde 3-phosphate and acetaldehyde from 2-deoxy-alpha-D-ribose 1-phosphate: step 1/2. Functionally, isomerase that catalyzes the conversion of deoxy-ribose 1-phosphate (dRib-1-P) and ribose 1-phosphate (Rib-1-P) to deoxy-ribose 5-phosphate (dRib-5-P) and ribose 5-phosphate (Rib-5-P), respectively. The protein is Phosphopentomutase of Rhizobium etli (strain ATCC 51251 / DSM 11541 / JCM 21823 / NBRC 15573 / CFN 42).